We begin with the raw amino-acid sequence, 333 residues long: G-protein coupled receptor 146 (333 aa).

The Extracellular portion of the chain corresponds to 1–21; sequence MWSCEDLNYTNSGEEQYLCNE. Residue N8 is glycosylated (N-linked (GlcNAc...) asparagine). The helical transmembrane segment at 22 to 42 threads the bilayer; the sequence is FHLFLFIFSVLYLIICFPVGL. Topologically, residues 43–65 are cytoplasmic; sequence CYNVQLVLVNLYNKATMTMPDVY. Residues 66–86 traverse the membrane as a helical segment; sequence FVNMAIAGLIINAVAPVYLFG. Over 87–102 the chain is Extracellular; it reads PAYTKWSLWSFGNEVY. A helical membrane pass occupies residues 103 to 123; it reads ITLLILFNVSSLVIMYSTTLL. Residues 124 to 146 are Cytoplasmic-facing; it reads SLDYYIECALPRTYMSSVYNTKH. Residues 147-167 form a helical membrane-spanning segment; sequence VCGFIWGGAVLTSFSSLLFYI. The Extracellular segment spans residues 168-189; it reads CNHVSTKIIECSKMQNREAADA. A helical transmembrane segment spans residues 190-210; that stretch reads IMVLIGYVVPIIAVIYALVLI. Residues 211 to 234 lie on the Cytoplasmic side of the membrane; it reads LQIRKEATPLDQESGRLDPSVHRL. The chain crosses the membrane as a helical span at residues 235 to 255; it reads LIATVCTQFILWTPYYVTLLV. At 256 to 275 the chain is on the extracellular side; sequence NTFMDARVKSSNTFYIRIFQ. The helical transmembrane segment at 276–296 threads the bilayer; that stretch reads FTEGLSNFLAFSSSFVLPLIH. Over 297 to 333 the chain is Cytoplasmic; sequence RHINKNFSGKLQRLLKRLHCGSQGCTHEHTVVQQVMT.

Belongs to the G-protein coupled receptor 1 family.

It localises to the cell membrane. Its function is as follows. G-protein coupled receptor required for the regulation of plasma cholesterol levels. The polypeptide is G-protein coupled receptor 146 (gpr146) (Xenopus laevis (African clawed frog)).